Here is a 612-residue protein sequence, read N- to C-terminus: Dihydroxy-acid dehydratase (612 aa).

Aspartate 81 contributes to the Mg(2+) binding site. Position 122 (cysteine 122) interacts with [2Fe-2S] cluster. Positions 123 and 124 each coordinate Mg(2+). Lysine 124 carries the post-translational modification N6-carboxylysine. Cysteine 193 lines the [2Fe-2S] cluster pocket. Glutamate 489 lines the Mg(2+) pocket. Serine 515 functions as the Proton acceptor in the catalytic mechanism.

This sequence belongs to the IlvD/Edd family. Homodimer. The cofactor is [2Fe-2S] cluster. Mg(2+) serves as cofactor.

The catalysed reaction is (2R)-2,3-dihydroxy-3-methylbutanoate = 3-methyl-2-oxobutanoate + H2O. It carries out the reaction (2R,3R)-2,3-dihydroxy-3-methylpentanoate = (S)-3-methyl-2-oxopentanoate + H2O. It functions in the pathway amino-acid biosynthesis; L-isoleucine biosynthesis; L-isoleucine from 2-oxobutanoate: step 3/4. It participates in amino-acid biosynthesis; L-valine biosynthesis; L-valine from pyruvate: step 3/4. Functions in the biosynthesis of branched-chain amino acids. Catalyzes the dehydration of (2R,3R)-2,3-dihydroxy-3-methylpentanoate (2,3-dihydroxy-3-methylvalerate) into 2-oxo-3-methylpentanoate (2-oxo-3-methylvalerate) and of (2R)-2,3-dihydroxy-3-methylbutanoate (2,3-dihydroxyisovalerate) into 2-oxo-3-methylbutanoate (2-oxoisovalerate), the penultimate precursor to L-isoleucine and L-valine, respectively. This chain is Dihydroxy-acid dehydratase, found in Stenotrophomonas maltophilia (strain K279a).